Reading from the N-terminus, the 216-residue chain is Pyridoxine/pyridoxamine 5'-phosphate oxidase (216 aa).

Residues 12–15 (RREY) and Lys-70 each bind substrate. Residues 65–70 (RVVLLK), 80–81 (YT), Arg-86, Lys-87, and Gln-109 contribute to the FMN site. Residues Tyr-127 and Arg-131 each coordinate substrate. Residues 144–145 (QS) and Trp-189 contribute to the FMN site. Residue 195-197 (RLH) participates in substrate binding. FMN is bound at residue Arg-199.

This sequence belongs to the pyridoxamine 5'-phosphate oxidase family. In terms of assembly, homodimer. Requires FMN as cofactor.

It carries out the reaction pyridoxamine 5'-phosphate + O2 + H2O = pyridoxal 5'-phosphate + H2O2 + NH4(+). It catalyses the reaction pyridoxine 5'-phosphate + O2 = pyridoxal 5'-phosphate + H2O2. The protein operates within cofactor metabolism; pyridoxal 5'-phosphate salvage; pyridoxal 5'-phosphate from pyridoxamine 5'-phosphate: step 1/1. Its pathway is cofactor metabolism; pyridoxal 5'-phosphate salvage; pyridoxal 5'-phosphate from pyridoxine 5'-phosphate: step 1/1. Functionally, catalyzes the oxidation of either pyridoxine 5'-phosphate (PNP) or pyridoxamine 5'-phosphate (PMP) into pyridoxal 5'-phosphate (PLP). The protein is Pyridoxine/pyridoxamine 5'-phosphate oxidase of Blochmanniella pennsylvanica (strain BPEN).